Here is a 237-residue protein sequence, read N- to C-terminus: Uracil-DNA glycosylase (237 aa).

Residue D77 is the Proton acceptor of the active site.

It belongs to the uracil-DNA glycosylase (UDG) superfamily. UNG family.

It is found in the cytoplasm. The enzyme catalyses Hydrolyzes single-stranded DNA or mismatched double-stranded DNA and polynucleotides, releasing free uracil.. In terms of biological role, excises uracil residues from the DNA which can arise as a result of misincorporation of dUMP residues by DNA polymerase or due to deamination of cytosine. This Acinetobacter baumannii (strain ACICU) protein is Uracil-DNA glycosylase.